The sequence spans 521 residues: Cysteine protease atg-4.2 (521 aa).

The segment covering 90-100 (MMGSIRPSSSS) has biased composition (low complexity). Positions 90 to 109 (MMGSIRPSSSSQDVHSTGEI) are disordered. Cys203 serves as the catalytic Nucleophile. Catalysis depends on residues Asp394 and His396. A disordered region spans residues 499–521 (PSYEREVSETEQAQADKHGFEML).

The protein belongs to the peptidase C54 family.

The protein localises to the cytoplasm. It catalyses the reaction [protein]-C-terminal L-amino acid-glycyl-phosphatidylethanolamide + H2O = [protein]-C-terminal L-amino acid-glycine + a 1,2-diacyl-sn-glycero-3-phosphoethanolamine. Its function is as follows. Cysteine protease required for autophagy. Cleaves the C-terminal amino acid of ATG8 family proteins lgg-1, to reveal a C-terminal glycine. Exposure of the glycine at the C-terminus is essential for ATG8 proteins conjugation to phosphatidylethanolamine (PE) and insertion to membranes, which is necessary for autophagy. Its cleavage activity is functionally redundant to atg-4.1, but it cleaves lgg-1 precursors less efficiently than atg-4.1. In contrast to atg-4.1, plays a more significant role in the later phases of autophagy and in addition has a role in autophagosome maturation. Acts redundantly with atg-4.1 to promote the lgg-1 delipidation to release the protein from membranes, which facilitates multiple events during macroautophagy. Regulates the accumulation of autophagic structures in neurons and is specifically, required for the maturation and elimination of autophagosomes from the synaptic region of AIY interneurons. This chain is Cysteine protease atg-4.2, found in Caenorhabditis elegans.